Here is a 313-residue protein sequence, read N- to C-terminus: Short-chain dehydrogenase/reductase family 9C member 7 (313 aa).

29–53 (FITGCDSGFGNLLAKQLVDRGMQVL) contributes to the NADP(+) binding site. Ser160 serves as a coordination point for substrate. The active-site Proton acceptor is the Tyr172. Position 185 is a phosphoserine (Ser185).

Belongs to the short-chain dehydrogenases/reductases (SDR) family. In terms of tissue distribution, expressed in the skin. Expressed in granular and cornified layers of the epidermis (at protein level). Highly expressed in liver.

It is found in the cytoplasm. The enzyme catalyses a N-[omega-(9R,10R)-epoxy-(13R)-hydroxy-(11E)-octadecenoyloxy]acyl-beta-D-glucosyl-(1&lt;-&gt;1)-sphing-4E-enine + NAD(+) = a N-[omega-(9R,10R)-epoxy-13-oxo-(11E)-octadecenoyloxy]acyl-beta-D-glucosyl-(1&lt;-&gt;1)-sphing-4E-enine + NADH + H(+). It carries out the reaction a N-[omega-(9R,10R)-epoxy-(13R)-hydroxy-(11E)-octadecenoyloxy]-acylsphing-4E-enine + NAD(+) = a N-[omega-(9R,10R)-epoxy-13-oxo-(11E)-octadecenoyloxy]-acylsphing-4E-enine + NADH + H(+). Plays a crucial role in the formation of the epidermal permeability barrier. Catalyzes the NAD+-dependent dehydrogenation of the linoleate 9,10-trans-epoxy-11E-13-alcohol esterified in omega-O-acylceramides (such as in N-[omega-(9R,10R)-epoxy-(13R)-hydroxy-(11E)-octadecenoyloxy]-acylsphing-4E-enine) to the corresponding 13-ketone, the reactive moiety required for binding of epidermal ceramides to proteins. Displays weak conversion of all-trans-retinal to all-trans-retinol in the presence of NADH. Has apparently no steroid dehydrogenase activity. The polypeptide is Short-chain dehydrogenase/reductase family 9C member 7 (SDR9C7) (Homo sapiens (Human)).